The chain runs to 480 residues: UDP-glycosyltransferase 72B1 (480 aa).

The active-site Proton acceptor is the histidine 19. Residue aspartate 117 is the Charge relay of the active site. UDP is bound by residues serine 277, tryptophan 346, alanine 347, and histidine 364. Serine 277, tryptophan 346, alanine 347, histidine 364, tryptophan 367, asparagine 368, serine 369, glutamate 372, tyrosine 386, glutamate 388, and glutamine 389 together coordinate UDP-alpha-D-glucose. Residues asparagine 368, serine 369, glutamate 372, and tyrosine 386 each contribute to the UDP site.

Belongs to the UDP-glycosyltransferase family.

It carries out the reaction hydroquinone + UDP-alpha-D-glucose = hydroquinone O-beta-D-glucopyranoside + UDP + H(+). Functionally, bifunctional O-glycosyltransferase and N-glycosyltransferase that can detoxify xenobiotics. Possesses high activity to metabolize the persistent pollutants 2,4,5-trichlorophenol (TCP) and 3,4-dichloroaniline (DCA). Also active on benzoates and benzoate derivatives in vitro. In Arabidopsis thaliana (Mouse-ear cress), this protein is UDP-glycosyltransferase 72B1 (UGT72B1).